A 418-amino-acid polypeptide reads, in one-letter code: UDP-N-acetylglucosamine 1-carboxyvinyltransferase (418 aa).

Phosphoenolpyruvate is bound at residue 22-23; that stretch reads KN. A UDP-N-acetyl-alpha-D-glucosamine-binding site is contributed by arginine 91. The active-site Proton donor is cysteine 115. Cysteine 115 carries the 2-(S-cysteinyl)pyruvic acid O-phosphothioketal modification. Residues 120–124, 160–163, aspartate 305, and isoleucine 327 contribute to the UDP-N-acetyl-alpha-D-glucosamine site; these read RPVDL and KVSV.

It belongs to the EPSP synthase family. MurA subfamily.

It is found in the cytoplasm. It catalyses the reaction phosphoenolpyruvate + UDP-N-acetyl-alpha-D-glucosamine = UDP-N-acetyl-3-O-(1-carboxyvinyl)-alpha-D-glucosamine + phosphate. It functions in the pathway cell wall biogenesis; peptidoglycan biosynthesis. Cell wall formation. Adds enolpyruvyl to UDP-N-acetylglucosamine. This Baumannia cicadellinicola subsp. Homalodisca coagulata protein is UDP-N-acetylglucosamine 1-carboxyvinyltransferase.